A 217-amino-acid chain; its full sequence is Flagellin B2 (217 aa).

A propeptide spanning residues 1-12 is cleaved from the precursor; sequence MKVFEFLKGKRG.

It belongs to the archaeal flagellin family.

It localises to the archaeal flagellum. Flagellin is the subunit protein which polymerizes to form the filaments of archaeal flagella. The chain is Flagellin B2 (flaB2) from Methanocaldococcus jannaschii (strain ATCC 43067 / DSM 2661 / JAL-1 / JCM 10045 / NBRC 100440) (Methanococcus jannaschii).